Reading from the N-terminus, the 174-residue chain is Adenylosuccinate synthetase (174 aa).

GTP-binding positions include 13 to 19 and 41 to 43; these read GDEGKGK and GHT. Asp-14 acts as the Proton acceptor in catalysis. Mg(2+) contacts are provided by Asp-14 and Gly-41. IMP is bound by residues 14–17, 39–42, Thr-130, and Arg-144; these read DEGK and NAGH. His-42 functions as the Proton donor in the catalytic mechanism.

Belongs to the adenylosuccinate synthetase family. Homodimer. Mg(2+) is required as a cofactor.

It localises to the cytoplasm. The catalysed reaction is IMP + L-aspartate + GTP = N(6)-(1,2-dicarboxyethyl)-AMP + GDP + phosphate + 2 H(+). Its pathway is purine metabolism; AMP biosynthesis via de novo pathway; AMP from IMP: step 1/2. Plays an important role in the de novo pathway of purine nucleotide biosynthesis. Catalyzes the first committed step in the biosynthesis of AMP from IMP. The chain is Adenylosuccinate synthetase from Stutzerimonas stutzeri (Pseudomonas stutzeri).